The primary structure comprises 666 residues: tRNA 5-methylaminomethyl-2-thiouridine biosynthesis bifunctional protein MnmC (666 aa).

A tRNA (mnm(5)s(2)U34)-methyltransferase region spans residues 1 to 245; the sequence is MKQYAIQPAT…KREMLCGVME (245 aa). Residues 270-666 form an FAD-dependent cmnm(5)s(2)U34 oxidoreductase region; that stretch reads IGGGIASALL…RKLLKGKAVK (397 aa).

It in the N-terminal section; belongs to the methyltransferase superfamily. tRNA (mnm(5)s(2)U34)-methyltransferase family. The protein in the C-terminal section; belongs to the DAO family. FAD serves as cofactor.

It is found in the cytoplasm. It catalyses the reaction 5-aminomethyl-2-thiouridine(34) in tRNA + S-adenosyl-L-methionine = 5-methylaminomethyl-2-thiouridine(34) in tRNA + S-adenosyl-L-homocysteine + H(+). Its function is as follows. Catalyzes the last two steps in the biosynthesis of 5-methylaminomethyl-2-thiouridine (mnm(5)s(2)U) at the wobble position (U34) in tRNA. Catalyzes the FAD-dependent demodification of cmnm(5)s(2)U34 to nm(5)s(2)U34, followed by the transfer of a methyl group from S-adenosyl-L-methionine to nm(5)s(2)U34, to form mnm(5)s(2)U34. This is tRNA 5-methylaminomethyl-2-thiouridine biosynthesis bifunctional protein MnmC from Salmonella arizonae (strain ATCC BAA-731 / CDC346-86 / RSK2980).